Here is a 190-residue protein sequence, read N- to C-terminus: Large ribosomal subunit protein uL5 (190 aa).

Belongs to the universal ribosomal protein uL5 family. As to quaternary structure, part of the 50S ribosomal subunit; part of the 5S rRNA/L5/L18/L25 subcomplex. Contacts the 5S rRNA and the P site tRNA. Forms a bridge to the 30S subunit in the 70S ribosome.

Its function is as follows. This is one of the proteins that bind and probably mediate the attachment of the 5S RNA into the large ribosomal subunit, where it forms part of the central protuberance. In the 70S ribosome it contacts protein S13 of the 30S subunit (bridge B1b), connecting the 2 subunits; this bridge is implicated in subunit movement. Contacts the P site tRNA; the 5S rRNA and some of its associated proteins might help stabilize positioning of ribosome-bound tRNAs. The chain is Large ribosomal subunit protein uL5 from Corynebacterium efficiens (strain DSM 44549 / YS-314 / AJ 12310 / JCM 11189 / NBRC 100395).